We begin with the raw amino-acid sequence, 310 residues long: Putative methyltransferase mtx subunit H (310 aa).

It belongs to the MtrH family. As to quaternary structure, may be part of a complex composed of 3 subunits; MtxA, MtxH and MtxX.

In Methanosarcina acetivorans (strain ATCC 35395 / DSM 2834 / JCM 12185 / C2A), this protein is Putative methyltransferase mtx subunit H (mtxH).